The sequence spans 229 residues: uncharacterized protein (229 aa).

The interval 61-229 is disordered; the sequence is MQAEDKVSKP…TESEDKPKRG (169 aa). Basic and acidic residues predominate over residues 109 to 128; sequence QQEKQQPEKAVVEQQEKQQP. Low complexity predominate over residues 166-194; the sequence is QPEQPERQQQAQPERQQQAQPERQQQAQP. Positions 195–204 are enriched in acidic residues; the sequence is EEAEDAEQEP. The span at 218 to 229 shows a compositional bias: basic and acidic residues; that stretch reads TQTESEDKPKRG.

This is an uncharacterized protein from Frog virus 3 (isolate Goorha) (FV-3).